Reading from the N-terminus, the 305-residue chain is Cytochrome c biogenesis protein CcsA (305 aa).

Helical transmembrane passes span 11-31, 36-56, 75-95, 97-117, 142-162, 212-232, 239-259, and 273-293; these read ANASFALLLITMLIYGMKAIF, ILQLFGTLGILFSNFLVALLL, LMFLCWCFTFFHLLIEKYIQI, FIGFITVPIAMLVNAFATFFL, IMMASYAALILGSLLSIAFLF, TIGIGFPLLTIGIISGAVWAN, WSWDPKETWALITWIIFAIYL, and AIVAFIGFVIVWVCYLGVNLL.

Belongs to the CcmF/CycK/Ccl1/NrfE/CcsA family. In terms of assembly, may interact with Ccs1.

The protein resides in the plastid. Its subcellular location is the chloroplast thylakoid membrane. Its function is as follows. Required during biogenesis of c-type cytochromes (cytochrome c6 and cytochrome f) at the step of heme attachment. This Mesostigma viride (Green alga) protein is Cytochrome c biogenesis protein CcsA.